A 143-amino-acid chain; its full sequence is Large ribosomal subunit protein uL16 (143 aa).

Over residues 1–17 the composition is skewed to basic residues; the sequence is MLQPKRTKFRKAHKGRI. The interval 1–20 is disordered; sequence MLQPKRTKFRKAHKGRIHGN.

This sequence belongs to the universal ribosomal protein uL16 family. Part of the 50S ribosomal subunit.

Functionally, binds 23S rRNA and is also seen to make contacts with the A and possibly P site tRNAs. In Zymomonas mobilis subsp. mobilis (strain ATCC 31821 / ZM4 / CP4), this protein is Large ribosomal subunit protein uL16.